Here is a 347-residue protein sequence, read N- to C-terminus: GMP reductase (347 aa).

Ala108–Ala131 lines the NADP(+) pocket. Residues Gly181 and Gly183 each coordinate K(+). Cys186 functions as the Thioimidate intermediate in the catalytic mechanism. Ile216–Val239 contributes to the NADP(+) binding site.

This sequence belongs to the IMPDH/GMPR family. GuaC type 1 subfamily. In terms of assembly, homotetramer.

It catalyses the reaction IMP + NH4(+) + NADP(+) = GMP + NADPH + 2 H(+). Catalyzes the irreversible NADPH-dependent deamination of GMP to IMP. It functions in the conversion of nucleobase, nucleoside and nucleotide derivatives of G to A nucleotides, and in maintaining the intracellular balance of A and G nucleotides. The polypeptide is GMP reductase (Shigella boydii serotype 18 (strain CDC 3083-94 / BS512)).